Reading from the N-terminus, the 123-residue chain is Ribosome-binding factor A (123 aa).

Belongs to the RbfA family. In terms of assembly, monomer. Binds 30S ribosomal subunits, but not 50S ribosomal subunits or 70S ribosomes.

It is found in the cytoplasm. One of several proteins that assist in the late maturation steps of the functional core of the 30S ribosomal subunit. Associates with free 30S ribosomal subunits (but not with 30S subunits that are part of 70S ribosomes or polysomes). Required for efficient processing of 16S rRNA. May interact with the 5'-terminal helix region of 16S rRNA. The protein is Ribosome-binding factor A of Dechloromonas aromatica (strain RCB).